Consider the following 177-residue polypeptide: uncharacterized protein (177 aa).

This is an uncharacterized protein from Homo sapiens (Human).